Here is a 730-residue protein sequence, read N- to C-terminus: Phosphoribosylformylglycinamidine synthase subunit PurL (730 aa).

Residue His-44 is part of the active site. ATP is bound by residues Tyr-47 and Lys-86. A Mg(2+)-binding site is contributed by Glu-88. Substrate-binding positions include 89–92 (SHNH) and Arg-111. Residue His-90 is the Proton acceptor of the active site. Asp-112 is a binding site for Mg(2+). Gln-235 is a binding site for substrate. Asp-263 lines the Mg(2+) pocket. 307 to 309 (ESQ) lines the substrate pocket. Positions 489 and 526 each coordinate ATP. Position 527 (Asn-527) interacts with Mg(2+). A substrate-binding site is contributed by Ser-529.

Belongs to the FGAMS family. As to quaternary structure, monomer. Part of the FGAM synthase complex composed of 1 PurL, 1 PurQ and 2 PurS subunits.

It localises to the cytoplasm. It catalyses the reaction N(2)-formyl-N(1)-(5-phospho-beta-D-ribosyl)glycinamide + L-glutamine + ATP + H2O = 2-formamido-N(1)-(5-O-phospho-beta-D-ribosyl)acetamidine + L-glutamate + ADP + phosphate + H(+). It functions in the pathway purine metabolism; IMP biosynthesis via de novo pathway; 5-amino-1-(5-phospho-D-ribosyl)imidazole from N(2)-formyl-N(1)-(5-phospho-D-ribosyl)glycinamide: step 1/2. In terms of biological role, part of the phosphoribosylformylglycinamidine synthase complex involved in the purines biosynthetic pathway. Catalyzes the ATP-dependent conversion of formylglycinamide ribonucleotide (FGAR) and glutamine to yield formylglycinamidine ribonucleotide (FGAM) and glutamate. The FGAM synthase complex is composed of three subunits. PurQ produces an ammonia molecule by converting glutamine to glutamate. PurL transfers the ammonia molecule to FGAR to form FGAM in an ATP-dependent manner. PurS interacts with PurQ and PurL and is thought to assist in the transfer of the ammonia molecule from PurQ to PurL. The polypeptide is Phosphoribosylformylglycinamidine synthase subunit PurL (Pelagibacter ubique (strain HTCC1062)).